A 281-amino-acid chain; its full sequence is Sulfur carrier protein FdhD (281 aa).

C127 functions as the Cysteine persulfide intermediate in the catalytic mechanism. 264 to 269 (FAREGR) contributes to the Mo-bis(molybdopterin guanine dinucleotide) binding site.

Belongs to the FdhD family.

It is found in the cytoplasm. In terms of biological role, required for formate dehydrogenase (FDH) activity. Acts as a sulfur carrier protein that transfers sulfur from IscS to the molybdenum cofactor prior to its insertion into FDH. The polypeptide is Sulfur carrier protein FdhD (Mannheimia succiniciproducens (strain KCTC 0769BP / MBEL55E)).